Consider the following 317-residue polypeptide: Melanocyte-stimulating hormone receptor (317 aa).

The Extracellular segment spans residues 1–37 (MPVLGSQRRLLGSLNCTPPATFPLTLAPNRTGPQCLE). An N-linked (GlcNAc...) asparagine glycan is attached at Asn-29. A helical transmembrane segment spans residues 38–63 (VSIPDGLFLSLGLVSLVENVLVVAAI). The Cytoplasmic portion of the chain corresponds to 64–72 (AKNRNLHSP). Residues 73 to 93 (MYYFICCLAMSDLLVSVSNVL) traverse the membrane as a helical segment. Residues 94–118 (ETAVMLLLEAGALAAQAAVVQQLDN) are Extracellular-facing. The helical transmembrane segment at 119-140 (VIDVLICGSMVSSLCFLGAIAV) threads the bilayer. The Cytoplasmic portion of the chain corresponds to 141–163 (DRYISIFYALRYHSVVTLPRAWR). Residues 164–183 (IIAAIWVASILTSLLFITYY) form a helical membrane-spanning segment. Residues 184–191 (NHTVVLLC) are Extracellular-facing. A helical membrane pass occupies residues 192 to 211 (LVGFFIAMLALMAVLYVHML). Over 212 to 240 (ARACQHARGIARLQKRQRPIHQGFGLKGA) the chain is Cytoplasmic. Residues 241-266 (ATLTILLGVFFLCWGPFFLHLSLIVL) form a helical membrane-spanning segment. Residues 267–279 (CPQHPTCGCIFKN) lie on the Extracellular side of the membrane. A helical membrane pass occupies residues 280–300 (FNLFLALIICNAIVDPLIYAF). Residues 301 to 317 (RSQELRKTLQEVLQCSW) are Cytoplasmic-facing. Residue Cys-315 is the site of S-palmitoyl cysteine attachment.

It belongs to the G-protein coupled receptor 1 family. As to quaternary structure, interacts with MGRN1, but does not undergo MGRN1-mediated ubiquitination; this interaction competes with GNAS-binding and thus inhibits agonist-induced cAMP production. Interacts with OPN3; the interaction results in a decrease in MC1R-mediated cAMP signaling and ultimately a decrease in melanin production in melanocytes.

The protein localises to the cell membrane. Its function is as follows. Receptor for MSH (alpha, beta and gamma) and ACTH. The activity of this receptor is mediated by G proteins which activate adenylate cyclase. Mediates melanogenesis, the production of eumelanin (black/brown) and phaeomelanin (red/yellow), via regulation of cAMP signaling in melanocytes. This is Melanocyte-stimulating hormone receptor (MC1R) from Dama dama (Fallow deer).